Reading from the N-terminus, the 473-residue chain is ATP synthase subunit beta (473 aa).

153–160 (GGAGVGKT) contacts ATP.

The protein belongs to the ATPase alpha/beta chains family. As to quaternary structure, F-type ATPases have 2 components, CF(1) - the catalytic core - and CF(0) - the membrane proton channel. CF(1) has five subunits: alpha(3), beta(3), gamma(1), delta(1), epsilon(1). CF(0) has three main subunits: a(1), b(2) and c(9-12). The alpha and beta chains form an alternating ring which encloses part of the gamma chain. CF(1) is attached to CF(0) by a central stalk formed by the gamma and epsilon chains, while a peripheral stalk is formed by the delta and b chains.

Its subcellular location is the cell inner membrane. It catalyses the reaction ATP + H2O + 4 H(+)(in) = ADP + phosphate + 5 H(+)(out). Produces ATP from ADP in the presence of a proton gradient across the membrane. The catalytic sites are hosted primarily by the beta subunits. This is ATP synthase subunit beta from Rickettsia rickettsii (strain Iowa).